Here is a 241-residue protein sequence, read N- to C-terminus: Pyridoxine 5'-phosphate synthase (241 aa).

Asn-7 provides a ligand contact to 3-amino-2-oxopropyl phosphate. 9 to 10 (DH) provides a ligand contact to 1-deoxy-D-xylulose 5-phosphate. Position 18 (Arg-18) interacts with 3-amino-2-oxopropyl phosphate. His-43 acts as the Proton acceptor in catalysis. The 1-deoxy-D-xylulose 5-phosphate site is built by Arg-45 and His-50. Glu-70 serves as the catalytic Proton acceptor. Thr-100 is a 1-deoxy-D-xylulose 5-phosphate binding site. His-191 serves as the catalytic Proton donor. 3-amino-2-oxopropyl phosphate-binding positions include Ser-192 and 213–214 (GH).

This sequence belongs to the PNP synthase family. In terms of assembly, homooctamer; tetramer of dimers.

It is found in the cytoplasm. It catalyses the reaction 3-amino-2-oxopropyl phosphate + 1-deoxy-D-xylulose 5-phosphate = pyridoxine 5'-phosphate + phosphate + 2 H2O + H(+). Its pathway is cofactor biosynthesis; pyridoxine 5'-phosphate biosynthesis; pyridoxine 5'-phosphate from D-erythrose 4-phosphate: step 5/5. Its function is as follows. Catalyzes the complicated ring closure reaction between the two acyclic compounds 1-deoxy-D-xylulose-5-phosphate (DXP) and 3-amino-2-oxopropyl phosphate (1-amino-acetone-3-phosphate or AAP) to form pyridoxine 5'-phosphate (PNP) and inorganic phosphate. The polypeptide is Pyridoxine 5'-phosphate synthase (Nitrosomonas eutropha (strain DSM 101675 / C91 / Nm57)).